Here is a 670-residue protein sequence, read N- to C-terminus: UvrABC system protein B (670 aa).

The region spanning 26-183 (NGLKSGLAFQ…QRLVDLQYNR (158 aa)) is the Helicase ATP-binding domain. ATP is bound at residue 39 to 46 (GVTGSGKT). A Beta-hairpin motif is present at residues 92-115 (YYDYYQPEAYVPSSDSFIEKDAAI). The Helicase C-terminal domain occupies 431–597 (QVDDLLSEIN…GLSKQVNDVM (167 aa)). In terms of domain architecture, UVR spans 630–665 (LKQIALSEKQMFACAKNLEFEKAALFRDEVTKLHEQ).

It belongs to the UvrB family. Forms a heterotetramer with UvrA during the search for lesions. Interacts with UvrC in an incision complex.

The protein resides in the cytoplasm. The UvrABC repair system catalyzes the recognition and processing of DNA lesions. A damage recognition complex composed of 2 UvrA and 2 UvrB subunits scans DNA for abnormalities. Upon binding of the UvrA(2)B(2) complex to a putative damaged site, the DNA wraps around one UvrB monomer. DNA wrap is dependent on ATP binding by UvrB and probably causes local melting of the DNA helix, facilitating insertion of UvrB beta-hairpin between the DNA strands. Then UvrB probes one DNA strand for the presence of a lesion. If a lesion is found the UvrA subunits dissociate and the UvrB-DNA preincision complex is formed. This complex is subsequently bound by UvrC and the second UvrB is released. If no lesion is found, the DNA wraps around the other UvrB subunit that will check the other stand for damage. In Psychromonas ingrahamii (strain DSM 17664 / CCUG 51855 / 37), this protein is UvrABC system protein B.